A 436-amino-acid polypeptide reads, in one-letter code: GTPase Der (436 aa).

2 consecutive EngA-type G domains span residues 4-167 (PTVA…PVEE) and 175-351 (IRFS…ESQN). Residues 10 to 17 (GRPNVGKS), 57 to 61 (DTGGI), 119 to 122 (NKVD), 181 to 188 (GRPNVGKS), 229 to 233 (DTAGM), and 294 to 297 (NKWD) contribute to the GTP site. Residues 352 to 436 (KRIPSAVLND…PIHLIARKRK (85 aa)) enclose the KH-like domain.

This sequence belongs to the TRAFAC class TrmE-Era-EngA-EngB-Septin-like GTPase superfamily. EngA (Der) GTPase family. Associates with the 50S ribosomal subunit.

Its function is as follows. GTPase that plays an essential role in the late steps of ribosome biogenesis. The polypeptide is GTPase Der (Streptococcus pyogenes serotype M5 (strain Manfredo)).